Consider the following 1326-residue polypeptide: Probable serine/threonine-protein kinase gdt8 (1326 aa).

An N-terminal signal peptide occupies residues 1–22; that stretch reads MINKILIKLITIIIFCFSFLFA. At 23-782 the chain is on the extracellular side; sequence EEDLIRTPPG…VDRNENLELK (760 aa). Disordered stretches follow at residues 419-467 and 731-762; these read VDQN…GNQG and EPPT…QTPI. Low complexity-rich tracts occupy residues 422 to 460 and 731 to 761; these read NNNN…NNNN and EPPT…TQTP. Residues 783 to 803 form a helical membrane-spanning segment; the sequence is IALPICLSLALLIGIIIMICI. The Cytoplasmic portion of the chain corresponds to 804-1326; that stretch reads FKKVQSNSKL…TKEDKDLDEN (523 aa). A disordered region spans residues 833-858; the sequence is IVSQPPTVIEEKPQDNSKPDDQKLIE. Residues 841-858 show a composition bias toward basic and acidic residues; that stretch reads IEEKPQDNSKPDDQKLIE. One can recognise a Protein kinase domain in the interval 1036–1292; sequence IKTEQLIASY…FSEISLHLEI (257 aa). Residues 1042 to 1050 and Lys-1065 each bind ATP; that span reads IASYLPSKV. Asp-1158 (proton acceptor) is an active-site residue. Residues 1301–1326 are disordered; that stretch reads MNESEESTSNHNTNSKTKEDKDLDEN. Residues 1316–1326 show a composition bias toward basic and acidic residues; the sequence is KTKEDKDLDEN.

This sequence in the N-terminal section; belongs to the GDT family. In the C-terminal section; belongs to the protein kinase superfamily. TKL Ser/Thr protein kinase family.

The protein resides in the membrane. It catalyses the reaction L-seryl-[protein] + ATP = O-phospho-L-seryl-[protein] + ADP + H(+). It carries out the reaction L-threonyl-[protein] + ATP = O-phospho-L-threonyl-[protein] + ADP + H(+). In Dictyostelium discoideum (Social amoeba), this protein is Probable serine/threonine-protein kinase gdt8 (gdt8).